The chain runs to 167 residues: Secreted LysM effector Blys6 (167 aa).

The N-terminal stretch at 1–16 is a signal peptide; that stretch reads MKGLCVAACTLVLAAA. Positions 109-162 constitute a LysM domain; that stretch reads KWYRIRRGDDCGPVASEFGISADQLIEWNPWLSADVDGTHYPCMNIWPTDNLCV.

It belongs to the secreted LysM effector family.

Might have a role in sequestration of chitin oligosaccharides (breakdown products of fungal cell walls that are released during invasion and act as triggers of host immunity) to dampen host defense. The sequence is that of Secreted LysM effector Blys6 from Beauveria bassiana (strain ARSEF 2860) (White muscardine disease fungus).